Reading from the N-terminus, the 274-residue chain is Penicillin-insensitive murein endopeptidase (274 aa).

The N-terminal stretch at 1-19 (MKKTAIALLAWFVSSASLA) is a signal peptide. 3 disulfide bridges follow: Cys44–Cys265, Cys187–Cys235, and Cys216–Cys223. Zn(2+)-binding residues include His110, His113, Asp120, Asp147, His150, and His211. Positions 225–274 (DQPLPPPGDGCGAELQSWFEPPKPGTTKPEKKTPPPLPPSCQALLDEHVL) are disordered.

This sequence belongs to the peptidase M74 family. Dimer. The cofactor is Zn(2+).

The protein localises to the periplasm. In terms of biological role, murein endopeptidase that cleaves the D-alanyl-meso-2,6-diamino-pimelyl amide bond that connects peptidoglycan strands. Likely plays a role in the removal of murein from the sacculus. The polypeptide is Penicillin-insensitive murein endopeptidase (Salmonella paratyphi A (strain AKU_12601)).